The primary structure comprises 495 residues: Dihydrolipoyl dehydrogenase, mitochondrial (495 aa).

Residues Glu59–Cys68, Lys77, and Ser169–Ser171 each bind FAD. The cysteines at positions 68 and 73 are disulfide-linked. NAD(+) is bound by residues Gly206–Glu213, Glu229, Val264, and Gly299. FAD is bound by residues Asp340 and Met346–His349. His472 serves as the catalytic Proton acceptor.

Belongs to the class-I pyridine nucleotide-disulfide oxidoreductase family. The cofactor is FAD.

It localises to the mitochondrion matrix. The enzyme catalyses N(6)-[(R)-dihydrolipoyl]-L-lysyl-[protein] + NAD(+) = N(6)-[(R)-lipoyl]-L-lysyl-[protein] + NADH + H(+). The sequence is that of Dihydrolipoyl dehydrogenase, mitochondrial (dld-1) from Caenorhabditis elegans.